A 284-amino-acid chain; its full sequence is 4-diphosphocytidyl-2-C-methyl-D-erythritol kinase (284 aa).

The active site involves Lys-14. Position 97–107 (97–107 (PMGGGLGGGSS)) interacts with ATP. Residue Asp-139 is part of the active site.

It belongs to the GHMP kinase family. IspE subfamily.

The catalysed reaction is 4-CDP-2-C-methyl-D-erythritol + ATP = 4-CDP-2-C-methyl-D-erythritol 2-phosphate + ADP + H(+). The protein operates within isoprenoid biosynthesis; isopentenyl diphosphate biosynthesis via DXP pathway; isopentenyl diphosphate from 1-deoxy-D-xylulose 5-phosphate: step 3/6. Catalyzes the phosphorylation of the position 2 hydroxy group of 4-diphosphocytidyl-2C-methyl-D-erythritol. The protein is 4-diphosphocytidyl-2-C-methyl-D-erythritol kinase of Psychromonas ingrahamii (strain DSM 17664 / CCUG 51855 / 37).